The following is a 577-amino-acid chain: 2-succinyl-5-enolpyruvyl-6-hydroxy-3-cyclohexene-1-carboxylate synthase (577 aa).

The protein belongs to the TPP enzyme family. MenD subfamily. As to quaternary structure, homodimer. Mg(2+) serves as cofactor. It depends on Mn(2+) as a cofactor. Requires thiamine diphosphate as cofactor.

The enzyme catalyses isochorismate + 2-oxoglutarate + H(+) = 5-enolpyruvoyl-6-hydroxy-2-succinyl-cyclohex-3-ene-1-carboxylate + CO2. It functions in the pathway quinol/quinone metabolism; 1,4-dihydroxy-2-naphthoate biosynthesis; 1,4-dihydroxy-2-naphthoate from chorismate: step 2/7. It participates in quinol/quinone metabolism; menaquinone biosynthesis. In terms of biological role, catalyzes the thiamine diphosphate-dependent decarboxylation of 2-oxoglutarate and the subsequent addition of the resulting succinic semialdehyde-thiamine pyrophosphate anion to isochorismate to yield 2-succinyl-5-enolpyruvyl-6-hydroxy-3-cyclohexene-1-carboxylate (SEPHCHC). In Porphyromonas gingivalis (strain ATCC BAA-308 / W83), this protein is 2-succinyl-5-enolpyruvyl-6-hydroxy-3-cyclohexene-1-carboxylate synthase.